We begin with the raw amino-acid sequence, 1100 residues long: Conjugal transfer protein TraA (1100 aa).

Gly404–Thr411 contacts ATP.

It belongs to the MobA/MobL family.

The chain is Conjugal transfer protein TraA (traA) from Rhizobium radiobacter (Agrobacterium tumefaciens).